A 220-amino-acid chain; its full sequence is uncharacterized protein (220 aa).

This is an uncharacterized protein from Archaeoglobus fulgidus (strain ATCC 49558 / DSM 4304 / JCM 9628 / NBRC 100126 / VC-16).